The following is a 355-amino-acid chain: (R,S)-reticuline 7-O-methyltransferase (355 aa).

S-adenosyl-L-methionine is bound by residues 197-200 (VGGG), D221, 221-222 (DL), 241-242 (DM), and K255. The active-site Proton acceptor is the H259.

The protein belongs to the class I-like SAM-binding methyltransferase superfamily. Cation-independent O-methyltransferase family. In terms of assembly, homodimer. Expressed in capsules, buds and stems, and at lower levels in leaves. Localized to parenchyma cells within the vascular bundle, but only to those cells distal to laticifers. In roots, found in the pericycle within the stele.

It carries out the reaction (S)-reticuline + S-adenosyl-L-methionine = (S)-laudanine + S-adenosyl-L-homocysteine + H(+). It catalyses the reaction (R)-reticuline + S-adenosyl-L-methionine = (R)-laudanine + S-adenosyl-L-homocysteine + H(+). Its function is as follows. Catalyzes the transfer of a methyl group to reticuline to form laudanine. Methylates the simple catechols guaiacol and isovanillic acid as well as the tetrahydrobenzylisoquinolines (R)-reticuline, (S)-reticuline, (R,S)-orientaline, (R)-protosinomenine and (R,S)-isoorientaline. Involved in the production of laudanine. This is (R,S)-reticuline 7-O-methyltransferase from Papaver somniferum (Opium poppy).